A 247-amino-acid chain; its full sequence is Type III pantothenate kinase (247 aa).

An ATP-binding site is contributed by 6 to 13 (DVGNTSIY). 102 to 105 (GADL) contributes to the substrate binding site. D104 (proton acceptor) is an active-site residue. A K(+)-binding site is contributed by D122. An ATP-binding site is contributed by T125. Residue T176 coordinates substrate.

This sequence belongs to the type III pantothenate kinase family. Homodimer. It depends on NH4(+) as a cofactor. K(+) serves as cofactor.

The protein localises to the cytoplasm. It catalyses the reaction (R)-pantothenate + ATP = (R)-4'-phosphopantothenate + ADP + H(+). It participates in cofactor biosynthesis; coenzyme A biosynthesis; CoA from (R)-pantothenate: step 1/5. Its function is as follows. Catalyzes the phosphorylation of pantothenate (Pan), the first step in CoA biosynthesis. The chain is Type III pantothenate kinase from Acholeplasma laidlawii (strain PG-8A).